A 303-amino-acid chain; its full sequence is Glycine--tRNA ligase alpha subunit (303 aa).

Belongs to the class-II aminoacyl-tRNA synthetase family. As to quaternary structure, tetramer of two alpha and two beta subunits.

It localises to the cytoplasm. It carries out the reaction tRNA(Gly) + glycine + ATP = glycyl-tRNA(Gly) + AMP + diphosphate. The sequence is that of Glycine--tRNA ligase alpha subunit from Enterobacter sp. (strain 638).